We begin with the raw amino-acid sequence, 781 residues long: MPSDKPVFDIGSQAPERSDSESPSSRSIGSGTPAPVRKGLSKFKNSFLSRKNSSQIKSPSDYKSSAHEQRVNHTTDSMAHVPGNNSPLQTPQKSPPRQKHTAPATPIPVSASRHHKPHHSGLKNLLEKAMHPGHKSNANSPTSESPSKGFGSFINNHILHKNTSSHPSSPVNGKSSDIHKSQSYQHLKNSPPNSRTARKPVPRRANSASHNLGSTKSPNGNAKESLSRSAELPSKAKPMEINNGYRKKPSPLSPNSSIRNREGGNGSYFDGPLTASPTPSSPTGTPNSMSKSPSLSSLASTGASYRPGPSKPLVSRVRDNYANTSYESWPHSTEFDMFTYAVSGSLKLTPQGTGFDCINPANPFSPGYSGKSSMKSDDNVGSSANTAPNSPTSANSSEGNQGNGPTTYPIKPPTNISEIPRKLKSGFIPPYAKRVVPRLSAKYKLVDETKDMGSGATAVIRIVTLKNPKENEKNLRFAVKAYRRKADDETDGQYIAKLASEWLVQCRMEHPNVVKSYDLCIDSHIFPLYSDTWCAVMDFCPRGDLLSLIEDRHDRLGKKDFECMIKQILRGLNYIHSQGIAHRDIKPENILISEYGVLRITDFGACDVLCNPGDDITAVESKSMGIFGSDPYMAPEILTPGSYNAFFADMWSTAIVLHCLYFRTYPFRKASQNDQLYAKYCKAWREYNLICDVQNIRISKTLPYFKPVNDLPMHMQRLFFCLANPTAEQRITAQEALNLPFVQEIECCSVDDCTCTHDAPEECLEWANPPVQKLSTPHNHL.

Disordered regions lie at residues 1–315 and 368–417; these read MPSD…PLVS and YSGK…TNIS. The span at 21 to 31 shows a compositional bias: low complexity; it reads ESPSSRSIGSG. Residues 43-63 are compositionally biased toward polar residues; sequence FKNSFLSRKNSSQIKSPSDYK. The segment covering 64-73 has biased composition (basic and acidic residues); sequence SSAHEQRVNH. Residues 74–92 show a composition bias toward polar residues; the sequence is TTDSMAHVPGNNSPLQTPQ. S94 is subject to Phosphoserine. Basic residues predominate over residues 112–121; the sequence is SRHHKPHHSG. Composition is skewed to polar residues over residues 136–146, 161–195, and 206–228; these read SNANSPTSESP, KNTS…PNSR, and NSAS…SLSR. The residue at position 253 (S253) is a Phosphoserine. Over residues 272–304 the composition is skewed to low complexity; the sequence is PLTASPTPSSPTGTPNSMSKSPSLSSLASTGAS. Polar residues predominate over residues 379–406; sequence NVGSSANTAPNSPTSANSSEGNQGNGPT. Residues 432–742 enclose the Protein kinase domain; sequence AKRVVPRLSA…AQEALNLPFV (311 aa). Residues 452–460 and K480 contribute to the ATP site; that span reads MGSGATAVI. D584 acts as the Proton acceptor in catalysis.

It belongs to the protein kinase superfamily. Ser/Thr protein kinase family.

The protein localises to the cytoplasm. The catalysed reaction is L-seryl-[protein] + ATP = O-phospho-L-seryl-[protein] + ADP + H(+). It carries out the reaction L-threonyl-[protein] + ATP = O-phospho-L-threonyl-[protein] + ADP + H(+). This Schizosaccharomyces pombe (strain 972 / ATCC 24843) (Fission yeast) protein is Probable serine/threonine-protein kinase C70.05c.